A 346-amino-acid chain; its full sequence is D-alanine--D-alanine ligase (346 aa).

One can recognise an ATP-grasp domain in the interval 133-327 (KLYAKSVGVK…ALADQISLEK (195 aa)). ATP is bound at residue 159 to 211 (LSFPCIIKPARLGSSIGISIVKDEKDLEYAKDVGFEFDNDLVVEEFKNNIKEY). Mg(2+)-binding residues include aspartate 284, glutamate 296, and asparagine 298.

This sequence belongs to the D-alanine--D-alanine ligase family. Mg(2+) serves as cofactor. Mn(2+) is required as a cofactor.

The protein resides in the cytoplasm. The enzyme catalyses 2 D-alanine + ATP = D-alanyl-D-alanine + ADP + phosphate + H(+). The protein operates within cell wall biogenesis; peptidoglycan biosynthesis. In terms of biological role, cell wall formation. The chain is D-alanine--D-alanine ligase from Campylobacter jejuni subsp. jejuni serotype O:2 (strain ATCC 700819 / NCTC 11168).